A 141-amino-acid chain; its full sequence is Hemoglobin subunit alpha (141 aa).

The region spanning 1-141 is the Globin domain; it reads VLSPADKTNV…VSTVLTSKYR (141 aa). A Phosphoserine modification is found at Ser-3. Lys-7 is subject to N6-succinyllysine. A Phosphothreonine modification is found at Thr-8. Position 11 is an N6-succinyllysine (Lys-11). The residue at position 16 (Lys-16) is an N6-acetyllysine; alternate. N6-succinyllysine; alternate is present on Lys-16. Tyr-24 is modified (phosphotyrosine). Phosphoserine is present on Ser-35. At Lys-40 the chain carries N6-succinyllysine. Phosphoserine is present on Ser-49. His-58 lines the O2 pocket. Position 87 (His-87) interacts with heme b. At Ser-102 the chain carries Phosphoserine. Position 108 is a phosphothreonine (Thr-108). Phosphoserine occurs at positions 124 and 131. Phosphothreonine occurs at positions 134 and 137. Residue Ser-138 is modified to Phosphoserine.

The protein belongs to the globin family. In terms of assembly, heterotetramer of two alpha chains and two beta chains. As to expression, red blood cells.

Involved in oxygen transport from the lung to the various peripheral tissues. Its function is as follows. Hemopressin acts as an antagonist peptide of the cannabinoid receptor CNR1. Hemopressin-binding efficiently blocks cannabinoid receptor CNR1 and subsequent signaling. This Cebus capucinus (White-faced sapajou) protein is Hemoglobin subunit alpha (HBA).